Consider the following 189-residue polypeptide: MVKVIASSVRKGNVLDVDGKLYVVLTAQNFHPGKGTPVTQVDMRRIVDGVKVSERWRTTEQVERAFVEDVNFQYLYEDGEGFHFMNPANYDQVVVSQETMGDQKAYLQEGMTCILSIHEGIPLALELPRHVTLEIVETEPVVKGQTASSSYKPAMLSNGIRTSVPPHIDAGTRVVIATEDNSYVERAKD.

The protein belongs to the elongation factor P family.

It is found in the cytoplasm. The protein operates within protein biosynthesis; polypeptide chain elongation. Its function is as follows. Involved in peptide bond synthesis. Stimulates efficient translation and peptide-bond synthesis on native or reconstituted 70S ribosomes in vitro. Probably functions indirectly by altering the affinity of the ribosome for aminoacyl-tRNA, thus increasing their reactivity as acceptors for peptidyl transferase. The chain is Elongation factor P from Rhizobium etli (strain CIAT 652).